A 347-amino-acid chain; its full sequence is Ribosomal RNA small subunit methyltransferase C (347 aa).

The protein belongs to the methyltransferase superfamily. RsmC family. Monomer.

The protein localises to the cytoplasm. It carries out the reaction guanosine(1207) in 16S rRNA + S-adenosyl-L-methionine = N(2)-methylguanosine(1207) in 16S rRNA + S-adenosyl-L-homocysteine + H(+). Functionally, specifically methylates the guanine in position 1207 of 16S rRNA in the 30S particle. In Shewanella baltica (strain OS185), this protein is Ribosomal RNA small subunit methyltransferase C.